The sequence spans 287 residues: Transcription initiation factor IIB 1 (287 aa).

A TFIIB-type zinc finger spans residues 3-31; sequence HPHRCPECDGTIRETDTEHVCADCGLVVT. Zn(2+) contacts are provided by C7, C10, C23, and C26. Positions 40–53 are enriched in basic and acidic residues; sequence EWRTFSDDPDHAPE. A disordered region spans residues 40–63; that stretch reads EWRTFSDDPDHAPERTGAPLTRSR. 2 tandem repeats follow at residues 111–194 and 205–286.

The protein belongs to the TFIIB family.

In terms of biological role, stabilizes TBP binding to an archaeal box-A promoter. Also responsible for recruiting RNA polymerase II to the pre-initiation complex (DNA-TBP-TFIIB). The sequence is that of Transcription initiation factor IIB 1 from Halobacterium salinarum (strain ATCC 700922 / JCM 11081 / NRC-1) (Halobacterium halobium).